Reading from the N-terminus, the 388-residue chain is tRNA 2-selenouridine synthase (388 aa).

One can recognise a Rhodanese domain in the interval 15 to 138; that stretch reads FTADTPLIDV…ARQFLINTID (124 aa). Cys98 acts as the S-selanylcysteine intermediate in catalysis.

It belongs to the SelU family. Monomer.

The enzyme catalyses 5-methylaminomethyl-2-thiouridine(34) in tRNA + selenophosphate + (2E)-geranyl diphosphate + H2O + H(+) = 5-methylaminomethyl-2-selenouridine(34) in tRNA + (2E)-thiogeraniol + phosphate + diphosphate. The catalysed reaction is 5-methylaminomethyl-2-thiouridine(34) in tRNA + (2E)-geranyl diphosphate = 5-methylaminomethyl-S-(2E)-geranyl-thiouridine(34) in tRNA + diphosphate. It carries out the reaction 5-methylaminomethyl-S-(2E)-geranyl-thiouridine(34) in tRNA + selenophosphate + H(+) = 5-methylaminomethyl-2-(Se-phospho)selenouridine(34) in tRNA + (2E)-thiogeraniol. It catalyses the reaction 5-methylaminomethyl-2-(Se-phospho)selenouridine(34) in tRNA + H2O = 5-methylaminomethyl-2-selenouridine(34) in tRNA + phosphate. Functionally, involved in the post-transcriptional modification of the uridine at the wobble position (U34) of tRNA(Lys), tRNA(Glu) and tRNA(Gln). Catalyzes the conversion of 2-thiouridine (S2U-RNA) to 2-selenouridine (Se2U-RNA). Acts in a two-step process involving geranylation of 2-thiouridine (S2U) to S-geranyl-2-thiouridine (geS2U) and subsequent selenation of the latter derivative to 2-selenouridine (Se2U) in the tRNA chain. In Nitrosomonas eutropha (strain DSM 101675 / C91 / Nm57), this protein is tRNA 2-selenouridine synthase.